The following is a 188-amino-acid chain: Pallidipin (188 aa).

The signal sequence occupies residues 1 to 18 (MKVIIAATLLGILMHAFA). Intrachain disulfides connect Cys21–Cys137, Cys55–Cys184, and Cys89–Cys105.

Belongs to the calycin superfamily. Triabin family. In terms of tissue distribution, expressed in salivary glands.

It is found in the secreted. Functionally, has been described as a specific inhibitor of collagen-induced platelet aggregation. However, as it does not affect platelet shape change or adhesion, it is plausible that it exerts its antiplatelet activity by a mechanism similar to that of triplatin, moubatin and dipetalodipin as scavenging eicosanoids involved in inflammation such as thromboxane A2 (TXA2). The protein is Pallidipin of Meccus pallidipennis (Triatomine bug).